A 402-amino-acid chain; its full sequence is MGSKRVCPDANNSVKSKKAKTLDFLAHPRRKIAIQFFYLGWEHDGLVQQPHTQNTVENHIMQALIKTHLIEDWTKCDFSRCGRTDKGVSAFKQTAAMVVRSLCPGDSGVFWSDSTQEHQKVDYKASGEELPYVKMLNGVLPKTIRVFAWAPVAQTFNARFDCNRRTYKYSFAKADLNLEKMRQGAELLVGEHDFSNFCQIDMNEKRLLQSYVRKVYEVKVEQVSTHPENDMYSMVELTVSGSGFLWHMIRYIVTILQEIGRENEQPSLISQLLDLKKYPSRPQYTLASDTPLCLFDCGYKSEDVEWKVHDYTLKSTVTGLQKTWATYQARSRMMENMLGELTGMAEFSSGDANKGLHEFVQDRPIPSNYIRFENRKMCESLESKKEKMAEKKKNGEESSDKL.

The active-site Nucleophile is the aspartate 85. The interval serine 383–leucine 402 is disordered.

Belongs to the tRNA pseudouridine synthase TruA family.

The catalysed reaction is a uridine in tRNA = a pseudouridine in tRNA. Its function is as follows. Formation of pseudouridine at position 38 and 39 in the anticodon stem and loop of transfer RNAs. In Caenorhabditis elegans, this protein is Probable tRNA pseudouridine synthase tag-124 (tag-124).